A 239-amino-acid polypeptide reads, in one-letter code: Probable transcriptional regulatory protein Bcer98_0465 (239 aa).

It belongs to the TACO1 family. YeeN subfamily.

The protein localises to the cytoplasm. In Bacillus cytotoxicus (strain DSM 22905 / CIP 110041 / 391-98 / NVH 391-98), this protein is Probable transcriptional regulatory protein Bcer98_0465.